We begin with the raw amino-acid sequence, 612 residues long: tRNA uridine 5-carboxymethylaminomethyl modification enzyme MnmG (612 aa).

9–14 (GAGHAG) contacts FAD. An NAD(+)-binding site is contributed by 270 to 284 (GPLYCPSIEDKVFKF).

This sequence belongs to the MnmG family. Homodimer. Heterotetramer of two MnmE and two MnmG subunits. FAD serves as cofactor.

The protein resides in the cytoplasm. NAD-binding protein involved in the addition of a carboxymethylaminomethyl (cmnm) group at the wobble position (U34) of certain tRNAs, forming tRNA-cmnm(5)s(2)U34. The chain is tRNA uridine 5-carboxymethylaminomethyl modification enzyme MnmG from Mycoplasma genitalium (strain ATCC 33530 / DSM 19775 / NCTC 10195 / G37) (Mycoplasmoides genitalium).